Reading from the N-terminus, the 147-residue chain is Hemoglobin subunit delta (147 aa).

The 145-residue stretch at 3–147 folds into the Globin domain; it reads HLTGEEKAAV…VANALAHKYH (145 aa). Heme b is bound by residues His64 and His93.

This sequence belongs to the globin family. As to quaternary structure, heterotetramer of two delta chains and two alpha chains. Red blood cells.

This is Hemoglobin subunit delta (HBD) from Ailuropoda melanoleuca (Giant panda).